The sequence spans 308 residues: 2-methylisocitrate lyase (308 aa).

Residue 54 to 56 (SGG) coordinates substrate. Residues D94 and D96 each contribute to the Mg(2+) site. Residues 131–132 (CG), R166, E196, 224–226 (NIT), R255, and R284 each bind substrate.

It belongs to the isocitrate lyase/PEP mutase superfamily. Methylisocitrate lyase family. As to quaternary structure, homotetramer; dimer of dimers. Mg(2+) is required as a cofactor.

The enzyme catalyses (2S,3R)-3-hydroxybutane-1,2,3-tricarboxylate = pyruvate + succinate. It functions in the pathway organic acid metabolism; propanoate degradation. Functionally, involved in the catabolism of short chain fatty acids (SCFA) via the 2-methylcitrate cycle I (propionate degradation route). Catalyzes the thermodynamically favored C-C bond cleavage reaction of (2R,3S)-2-methylisocitrate to yield pyruvate and succinate via an alpha-carboxy-carbanion intermediate. The protein is 2-methylisocitrate lyase of Vibrio cholerae serotype O1 (strain ATCC 39315 / El Tor Inaba N16961).